Reading from the N-terminus, the 287-residue chain is Toxin zeta (287 aa).

40–47 is an ATP binding site; it reads GQPGSGKT. The interval 250–287 is disordered; sequence MVQNQHQETPEFKAIQQKMESLQPPTPPIPKTPKLPGI. Residues 273–287 show a composition bias toward pro residues; the sequence is PPTPPIPKTPKLPGI.

It belongs to the zeta toxin family. In terms of assembly, in the presence of the epsilon antitoxin, forms an inactive PezA(2)PezT(2) heterotetramer.

It catalyses the reaction UDP-N-acetyl-alpha-D-glucosamine + ATP = UDP-N-acetyl-alpha-D-glucosamine 3'-phosphate + ADP + H(+). Toxic component of a type II toxin-antitoxin (TA) system. Phosphorylates UDP-N-acetyl-D-glucosamine (UNAG) on the 3'-hydroxyl group of the N-acetyl-D-glucosamine moiety, yielding UNAG-3P. UNAG-3P inhibits MurA, the first committed step in cell wall synthesis, which is then blocked. Phosphorylation is inhibited by cognate epsilon antitoxin. Part of a postsegregational killing (PSK) system involved in the killing of plasmid-free cells. The zeta toxin induces programmed cell death. The polypeptide is Toxin zeta (Streptococcus agalactiae).